A 301-amino-acid chain; its full sequence is Phosphatidylserine decarboxylase proenzyme (301 aa).

Residues D117, H173, and S260 each act as charge relay system; for autoendoproteolytic cleavage activity in the active site. S260 acts as the Schiff-base intermediate with substrate; via pyruvic acid; for decarboxylase activity in catalysis. S260 carries the post-translational modification Pyruvic acid (Ser); by autocatalysis.

The protein belongs to the phosphatidylserine decarboxylase family. PSD-B subfamily. Prokaryotic type II sub-subfamily. Heterodimer of a large membrane-associated beta subunit and a small pyruvoyl-containing alpha subunit. It depends on pyruvate as a cofactor. Post-translationally, is synthesized initially as an inactive proenzyme. Formation of the active enzyme involves a self-maturation process in which the active site pyruvoyl group is generated from an internal serine residue via an autocatalytic post-translational modification. Two non-identical subunits are generated from the proenzyme in this reaction, and the pyruvate is formed at the N-terminus of the alpha chain, which is derived from the carboxyl end of the proenzyme. The autoendoproteolytic cleavage occurs by a canonical serine protease mechanism, in which the side chain hydroxyl group of the serine supplies its oxygen atom to form the C-terminus of the beta chain, while the remainder of the serine residue undergoes an oxidative deamination to produce ammonia and the pyruvoyl prosthetic group on the alpha chain. During this reaction, the Ser that is part of the protease active site of the proenzyme becomes the pyruvoyl prosthetic group, which constitutes an essential element of the active site of the mature decarboxylase.

Its subcellular location is the cell membrane. The catalysed reaction is a 1,2-diacyl-sn-glycero-3-phospho-L-serine + H(+) = a 1,2-diacyl-sn-glycero-3-phosphoethanolamine + CO2. It functions in the pathway phospholipid metabolism; phosphatidylethanolamine biosynthesis; phosphatidylethanolamine from CDP-diacylglycerol: step 2/2. Its function is as follows. Catalyzes the formation of phosphatidylethanolamine (PtdEtn) from phosphatidylserine (PtdSer). The protein is Phosphatidylserine decarboxylase proenzyme of Chlamydia trachomatis serovar L2 (strain ATCC VR-902B / DSM 19102 / 434/Bu).